A 41-amino-acid chain; its full sequence is Large ribosomal subunit protein bL36 (41 aa).

It belongs to the bacterial ribosomal protein bL36 family.

The chain is Large ribosomal subunit protein bL36 from Sinorhizobium medicae (strain WSM419) (Ensifer medicae).